Consider the following 407-residue polypeptide: Transmembrane protein 184B (407 aa).

A disordered region spans residues 1 to 24 (MTVRGAALAPDPASPTTAAASPSI). The next 7 helical transmembrane spans lie at 40–60 (FLMT…ALLI), 84–104 (ILFI…FFTN), 121–141 (LVIY…SSIM), 178–198 (LQFC…QAFG), 214–234 (VTII…LFYF), 249–269 (FFMV…LAIL), and 290–310 (VAAG…ALAL). Residues 369–395 (TLEPGPTWRGGAHGLSRSHSLSGARDN) are disordered. Serine 388, serine 402, and serine 403 each carry phosphoserine.

It belongs to the TMEM184 family.

Its subcellular location is the membrane. In terms of biological role, may activate the MAP kinase signaling pathway. In Bos taurus (Bovine), this protein is Transmembrane protein 184B (TMEM184B).